The sequence spans 655 residues: p-hydroxybenzoic acid efflux pump subunit AaeB (655 aa).

Helical transmembrane passes span 13-33 (FAVKLASAIVLTLFVGFHFQL), 38-58 (WAVLTAAIVAAGPAFAAGGEP), 69-89 (LRIIGTFIGCIAGLVIIIAMI), 93-113 (LLMILVCCIWAGFCTWISSLV), 121-141 (WGLAGYTALIIVITIQPEPLL), 152-172 (EIVVGIVCAIVADLIFSPRSI), 370-390 (LFWLWTGWTSGSGAMVMIAVV), 407-427 (FIYGTLAALPLGLLYFLVIIP), 431-451 (QSMLLLCLSLAVLGFFLGIEV), and 481-501 (LFLDSALGQIVGCVLAFTVIL).

Belongs to the aromatic acid exporter ArAE (TC 2.A.85) family.

The protein localises to the cell inner membrane. Its function is as follows. Forms an efflux pump with AaeA. Could function as a metabolic relief valve, allowing to eliminate certain compounds when they accumulate to high levels in the cell. This is p-hydroxybenzoic acid efflux pump subunit AaeB from Escherichia fergusonii (strain ATCC 35469 / DSM 13698 / CCUG 18766 / IAM 14443 / JCM 21226 / LMG 7866 / NBRC 102419 / NCTC 12128 / CDC 0568-73).